The sequence spans 269 residues: Protein NETWORKED 3A (269 aa).

The 82-residue stretch at 6–87 folds into the NAB domain; sequence SKWWWIGNHN…ERYDLLRPSS (82 aa). The disordered stretch occupies residues 87–113; that stretch reads SVHKHGSDSESHEKSSTCDESSWSEAC. Positions 91–103 are enriched in basic and acidic residues; sequence HGSDSESHEKSST. Residues 155–214 adopt a coiled-coil conformation; it reads NGNSEMMKIEIERLREENKVYSEMVREKDEEKREAIRQMSVAIQMLKEENSELKKRVTNT.

Belongs to the NET family.

The protein resides in the cytoplasm. Its subcellular location is the cytoskeleton. The protein localises to the nucleus membrane. In terms of biological role, plant-specific actin binding protein. May be part of a membrane-cytoskeletal adapter complex. This chain is Protein NETWORKED 3A, found in Arabidopsis thaliana (Mouse-ear cress).